The primary structure comprises 127 residues: Small ribosomal subunit protein uS11 (127 aa).

Belongs to the universal ribosomal protein uS11 family. In terms of assembly, part of the 30S ribosomal subunit. Interacts with proteins S7 and S18. Binds to IF-3.

Its function is as follows. Located on the platform of the 30S subunit, it bridges several disparate RNA helices of the 16S rRNA. Forms part of the Shine-Dalgarno cleft in the 70S ribosome. This Streptococcus thermophilus (strain CNRZ 1066) protein is Small ribosomal subunit protein uS11.